Consider the following 75-residue polypeptide: Bacteriocin lactacin-F subunit LafA (75 aa).

A propeptide spanning residues M1 to G18 is cleaved from the precursor.

This sequence belongs to the bacteriocin class IIB family. This bacteriocin depends upon the complementation of two peptides for activity: LafA and LafX. Associated with a 180 kDa bacteriocin complex.

In terms of biological role, heat stable bacteriocin active against Enterococcus faecalis and other Lactobacilli. This Lactobacillus johnsonii (strain CNCM I-12250 / La1 / NCC 533) protein is Bacteriocin lactacin-F subunit LafA (lafA).